Here is a 493-residue protein sequence, read N- to C-terminus: Putative MgpC-like protein MPN_414 (493 aa).

Positions 1–14 (MKPTSLPKNFTNNP) are enriched in polar residues. Disordered stretches follow at residues 1-92 (MKPT…GHNS) and 441-493 (KSAR…SGNH). 2 stretches are compositionally biased toward basic and acidic residues: residues 25 to 34 (DNGRAYRKLN) and 44 to 56 (DSTK…DKDG). 2 stretches are compositionally biased toward polar residues: residues 72–92 (VSST…GHNS) and 445–472 (ENAQ…SPCR). The span at 482–493 (RVTEEERSSGNH) shows a compositional bias: basic and acidic residues.

It belongs to the MgpC family.

The polypeptide is Putative MgpC-like protein MPN_414 (Mycoplasma pneumoniae (strain ATCC 29342 / M129 / Subtype 1) (Mycoplasmoides pneumoniae)).